The chain runs to 512 residues: MGEYQLHQSRNLSVNQTLDEILGISRKSETTTTSSGSSGAEKNALNSPIRPPTRHGRESSGSNEENKDPIQLENGNGSTLSFLTSSSSATSSTAARRNSDDDFIKKLNDIRRRSLISTMDATSTPTTSVPIHFDSPRRESRPCLEIHVEESPEELSTHAVEITEFHRDLSENSLGTSTDHEDPSLTFRVDKELEQSESKKTTKRPASGVKKTLKASISIDAPKPKPRPRPQTSANLSTKTIKDKDQEMMQMSMFGSKLNKPSDAHHKEWLQKKEREIREKKAKEKAAAEQKAATEKERRENSAKLYQRWVQDHDKKAKELKSKKTQQERKKSENEKTTQDQKLKEAEKNYEMWKRERSKSVTDIRKKLEQEEDKKRKKEEEAKNEKIKEAQAAFLAWKRKKEELLNEEAEKLKKEQVQKQLEESEKMTRLSLANEAYETWIELKESEREFIADFVLIEAPPIPWLPPSNLIPRQFVRSSNGNRLRARSQSAKSIAKRSRSRPGTTTSLRPFR.

3 disordered regions span residues 24 to 103 (ISRK…DDDF), 168 to 386 (DLSE…KNEK), and 481 to 512 (GNRL…RPFR). 2 stretches are compositionally biased toward low complexity: residues 30 to 39 (TTTTSSGSSG) and 78 to 95 (STLS…STAA). The segment covering 178-200 (TDHEDPSLTFRVDKELEQSESKK) has biased composition (basic and acidic residues). Polar residues predominate over residues 230–239 (PQTSANLSTK). 2 stretches are compositionally biased toward basic and acidic residues: residues 260–302 (KPSD…RENS) and 310–386 (VQDH…KNEK). A coiled-coil region spans residues 267–429 (KEWLQKKERE…QLEESEKMTR (163 aa)). A compositionally biased stretch (polar residues) spans 502–512 (PGTTTSLRPFR).

Expressed in amphid and phasmid ciliated neurons.

The protein localises to the cell projection. It is found in the cilium. Its subcellular location is the cytoplasm. It localises to the cytoskeleton. The protein resides in the cilium axoneme. In Caenorhabditis elegans, this protein is Protein maph-9.